The primary structure comprises 187 residues: Thioredoxin F, chloroplastic (187 aa).

The N-terminal 72 residues, 1-72 (MALRLSVSSS…GSDTATVGAE (72 aa)), are a transit peptide targeting the chloroplast. Residues 73 to 186 (AEAVAVTGQV…LIQAIETVKS (114 aa)) enclose the Thioredoxin domain. Catalysis depends on nucleophile residues Cys-111 and Cys-114. Cys-111 and Cys-114 are disulfide-bonded.

The protein belongs to the thioredoxin family. Plant F-type subfamily.

The protein localises to the plastid. Its subcellular location is the chloroplast. In terms of biological role, thiol-disulfide oxidoreductase involved in the redox regulation of enzymes of both reductive pentose phosphate pathway (Calvin-Benson cycle) and oxidative pentose phosphate pathway. This Oryza sativa subsp. japonica (Rice) protein is Thioredoxin F, chloroplastic.